A 160-amino-acid polypeptide reads, in one-letter code: MANIRIGHGYDVHAFKAGGHVVLGGVRIPHAKAFAAHSDGDVLIHALCDALLGAAALGDIGRHFPDTDPAYKGADSRVLLRRVVELLHEQGYRVGNVDATIIAQAPKMAPHIEAMRANLADDLGVALECVNVKATTTERLGFAGREEGIAAHAVALIESF.

A divalent metal cation contacts are provided by D11 and H13. 4-CDP-2-C-methyl-D-erythritol 2-phosphate is bound by residues 11 to 13 (DVH) and 37 to 38 (HS). H45 contacts a divalent metal cation. Residues 59-61 (DIG), 64-68 (FPDTD), 103-109 (AQAPKMA), 135-138 (TTTE), F142, and R145 each bind 4-CDP-2-C-methyl-D-erythritol 2-phosphate.

This sequence belongs to the IspF family. In terms of assembly, homotrimer. The cofactor is a divalent metal cation.

The enzyme catalyses 4-CDP-2-C-methyl-D-erythritol 2-phosphate = 2-C-methyl-D-erythritol 2,4-cyclic diphosphate + CMP. It functions in the pathway isoprenoid biosynthesis; isopentenyl diphosphate biosynthesis via DXP pathway; isopentenyl diphosphate from 1-deoxy-D-xylulose 5-phosphate: step 4/6. Functionally, involved in the biosynthesis of isopentenyl diphosphate (IPP) and dimethylallyl diphosphate (DMAPP), two major building blocks of isoprenoid compounds. Catalyzes the conversion of 4-diphosphocytidyl-2-C-methyl-D-erythritol 2-phosphate (CDP-ME2P) to 2-C-methyl-D-erythritol 2,4-cyclodiphosphate (ME-CPP) with a corresponding release of cytidine 5-monophosphate (CMP). The protein is 2-C-methyl-D-erythritol 2,4-cyclodiphosphate synthase of Thioalkalivibrio sulfidiphilus (strain HL-EbGR7).